The chain runs to 1852 residues: Chitin synthase csmA (1852 aa).

The tract at residues 1–20 is disordered; that stretch reads MVGTLPAGHTPSHVQSSLPS. Positions 1–787 constitute a Myosin motor domain; it reads MVGTLPAGHT…CWADLAKVGE (787 aa). Asparagine 58 is a glycosylation site (N-linked (GlcNAc...) asparagine). Position 102 to 109 (102 to 109) interacts with ATP; it reads GESGAGKT. Residues 599–646 are disordered; that stretch reads SSKPLRMPSMARRKTSPASRLTFDATPAEDPYETESQTGSSAKNSSAK. An N-linked (GlcNAc...) asparagine glycan is attached at asparagine 642. The tract at residues 667 to 691 is actin-binding; the sequence is LDIVNKCLTSGNLNPYFVFCLKPND. N-linked (GlcNAc...) asparagine glycosylation occurs at asparagine 840. Transmembrane regions (helical) follow at residues 895-915 and 930-950; these read WMAIVWLLTFYIPTPAIRYIG and FAINLLIWLACAIAVFIIVGF. A Cytochrome b5 heme-binding domain is found at 958–1017; that stretch reads QHVYSPAELSSHDGKDGHSSYTSIRGLVLDLGEFMDSHYPGIVPDSALKKYAGVDSTALF. N-linked (GlcNAc...) asparagine glycosylation is found at asparagine 1044 and asparagine 1195. A helical membrane pass occupies residues 1205 to 1225; that stretch reads FILAISVLICSVIVFKFFAAL. Residues asparagine 1428, asparagine 1462, and asparagine 1568 are each glycosylated (N-linked (GlcNAc...) asparagine). 3 consecutive transmembrane segments (helical) span residues 1600 to 1620, 1626 to 1646, and 1653 to 1673; these read ISTIIMPVTVAYIVYLIVWLV, IPWTSFLLLAAIYGLQAIIFI, and MIGWMIIYILAIPVYSLALPL. Residues 1794–1849 enclose the DEK-C domain; that stretch reads LPSDDAILSEIRDILRTADLMTVTKKNIKQELERRFGVNLDAKRPYINSATEAVLS.

In the N-terminal section; belongs to the TRAFAC class myosin-kinesin ATPase superfamily. Myosin family. The protein in the C-terminal section; belongs to the chitin synthase family. Class V subfamily. In terms of assembly, binds F-actin via its N-terminal myosin motor-like domain (MMD). Interacts with kibesin kinA.

The protein resides in the cell membrane. It localises to the cell septum. The protein localises to the cell tip. It catalyses the reaction [(1-&gt;4)-N-acetyl-beta-D-glucosaminyl](n) + UDP-N-acetyl-alpha-D-glucosamine = [(1-&gt;4)-N-acetyl-beta-D-glucosaminyl](n+1) + UDP + H(+). Functionally, polymerizes chitin, a structural polymer of the cell wall and septum, by transferring the sugar moiety of UDP-GlcNAc to the non-reducing end of the growing chitin polymer. Plays an important role in polarized hyphal cell wall synthesis and maintenance of cell wall integrity. Its role in growth and morphogenesis is particularly important under low osmotic conditions. The polypeptide is Chitin synthase csmA (Emericella nidulans (Aspergillus nidulans)).